Consider the following 1186-residue polypeptide: Pesticidal crystal protein Cry14Aa (1186 aa).

This sequence belongs to the delta endotoxin family.

Promotes colloidosmotic lysis by binding to the midgut epithelial cells of insects. The sequence is that of Pesticidal crystal protein Cry14Aa (cry14Aa) from Bacillus thuringiensis subsp. sotto.